The sequence spans 193 residues: Achaete-scute homolog 2 (193 aa).

Disordered stretches follow at residues 1 to 58 (MDSR…RNER) and 128 to 177 (PLPR…GALS). The region spanning 50–102 (AAVARRNERERNRVKLVNLGFQALRQHVPHGGASKKLSKVETLRSAVEYIRAL) is the bHLH domain. Over residues 128–152 (PLPRAPSGTPATAASPSCASSSPGR) the composition is skewed to low complexity.

In terms of assembly, efficient DNA binding requires dimerization with another basic helix-loop-helix (bHLH) protein. Forms heterodimers with bHLH transcription factor TCF3. May not heterodimerise with bHLH protein HAND1. Expressed in placenta.

It localises to the nucleus. Transcription factor. Binds to E-box motifs 5'-CANNTG-3' in the regulatory elements of target genes, probably as a heterodimer with another basic helix-loop-helix (bHLH) protein such as the transcription factor TCF3. May bind both open and closed chromatin, acting as a pioneer transcription factor to allow other factors to bind and activate lineage-specific genes. Required during post-implantation development for the generation of some differentiated trophoblast cell types. Transcriptional activity of ASCL2 may be antagonised in a subset of trophoblast cells by bHLH transcription factor HAND1, perhaps by competing for dimerization with other bHLH proteins. Involved in differentiation and function of follicular T-helper (Tfh) cells, thereby playing a role in germinal center responses; probably modulates expression of genes involved in Tfh cell function, such as BCL6. May also act as a suppressor of Th1-, Th2- and Th17-cell differentiation. Induces the formation of stem cells in intestinal crypts in vitro, synergistically activating transcription of target genes, such as SOX9, together with TCF4/beta-catenin. May form a bistable transcriptional switch, controlling expression of its own gene together with Wnt/R-spondin signaling, and thereby maintaining stem cell characteristics. Modulates expression of target genes, including perhaps down-regulating EGR1/Krox24 and chemokine CXCL10/Mob-1 and up-regulating CXCR4 and CDKN1C/p57kip2, in Schwann cells. May play a role in reducing proliferation of Schwann cells, perhaps acting via modulation of expression of CDKN1C. May be dispensable for blastocyst formation and later embryonic function. May be involved in the determination of neuronal precursors. This is Achaete-scute homolog 2 (ASCL2) from Bos taurus (Bovine).